A 210-amino-acid chain; its full sequence is FMN-dependent NADH:quinone oxidoreductase (210 aa).

FMN contacts are provided by residues 17–19 (SRS), 102–105 (MWNL), and 148–151 (SCGG).

Belongs to the azoreductase type 1 family. As to quaternary structure, homodimer. The cofactor is FMN.

The enzyme catalyses 2 a quinone + NADH + H(+) = 2 a 1,4-benzosemiquinone + NAD(+). The catalysed reaction is N,N-dimethyl-1,4-phenylenediamine + anthranilate + 2 NAD(+) = 2-(4-dimethylaminophenyl)diazenylbenzoate + 2 NADH + 2 H(+). Functionally, quinone reductase that provides resistance to thiol-specific stress caused by electrophilic quinones. Also exhibits azoreductase activity. Catalyzes the reductive cleavage of the azo bond in aromatic azo compounds to the corresponding amines. The protein is FMN-dependent NADH:quinone oxidoreductase of Trichlorobacter lovleyi (strain ATCC BAA-1151 / DSM 17278 / SZ) (Geobacter lovleyi).